A 131-amino-acid polypeptide reads, in one-letter code: Ribosome-binding factor A (131 aa).

The protein belongs to the RbfA family. In terms of assembly, monomer. Binds 30S ribosomal subunits, but not 50S ribosomal subunits or 70S ribosomes.

The protein localises to the cytoplasm. Its function is as follows. One of several proteins that assist in the late maturation steps of the functional core of the 30S ribosomal subunit. Associates with free 30S ribosomal subunits (but not with 30S subunits that are part of 70S ribosomes or polysomes). Required for efficient processing of 16S rRNA. May interact with the 5'-terminal helix region of 16S rRNA. The sequence is that of Ribosome-binding factor A from Gloeothece citriformis (strain PCC 7424) (Cyanothece sp. (strain PCC 7424)).